The sequence spans 310 residues: Protoheme IX farnesyltransferase (310 aa).

Transmembrane regions (helical) follow at residues 26–46 (VMSL…ATVH), 47–67 (PMIA…SGAL), 95–115 (GEAL…LGLA), 118–138 (LFAA…YSMW), 147–167 (IVIG…VATG), 174–194 (LFMF…LALF), 220–240 (VLAY…TGIG), 243–263 (LYLV…VRIW), and 281–301 (FFRF…AEAA).

The protein belongs to the UbiA prenyltransferase family. Protoheme IX farnesyltransferase subfamily. As to quaternary structure, interacts with CtaA.

The protein localises to the cell inner membrane. It catalyses the reaction heme b + (2E,6E)-farnesyl diphosphate + H2O = Fe(II)-heme o + diphosphate. It participates in porphyrin-containing compound metabolism; heme O biosynthesis; heme O from protoheme: step 1/1. Its function is as follows. Converts heme B (protoheme IX) to heme O by substitution of the vinyl group on carbon 2 of heme B porphyrin ring with a hydroxyethyl farnesyl side group. The protein is Protoheme IX farnesyltransferase of Cereibacter sphaeroides (strain ATCC 17025 / ATH 2.4.3) (Rhodobacter sphaeroides).